A 455-amino-acid chain; its full sequence is Mitochondrial distribution and morphology protein 10 (455 aa).

Disordered stretches follow at residues 216 to 249 (WETT…EDAV), 278 to 311 (IRFS…PSPA), and 377 to 399 (PRSS…PLGE). Over residues 217-227 (ETTNGENGTNT) the composition is skewed to low complexity. Residues 228-237 (SAPGNASNSR) show a composition bias toward polar residues. Positions 291 to 301 (AQIPPPSPFTP) are enriched in pro residues.

It belongs to the MDM10 family. In terms of assembly, component of the ER-mitochondria encounter structure (ERMES) or MDM complex, composed of MMM1, MDM10, MDM12 and MDM34. Associates with the mitochondrial outer membrane sorting assembly machinery SAM(core) complex.

Its subcellular location is the mitochondrion outer membrane. Its function is as follows. Component of the ERMES/MDM complex, which serves as a molecular tether to connect the endoplasmic reticulum and mitochondria. Components of this complex are involved in the control of mitochondrial shape and protein biogenesis and may function in phospholipid exchange. MDM10 is involved in the late assembly steps of the general translocase of the mitochondrial outer membrane (TOM complex). Functions in the TOM40-specific route of the assembly of outer membrane beta-barrel proteins, including the association of TOM40 with the receptor TOM22 and small TOM proteins. Can associate with the SAM(core) complex as well as the MDM12-MMM1 complex, both involved in late steps of the major beta-barrel assembly pathway, that is responsible for biogenesis of all outer membrane beta-barrel proteins. May act as a switch that shuttles between both complexes and channels precursor proteins into the TOM40-specific pathway. Plays a role in mitochondrial morphology and in the inheritance of mitochondria. The protein is Mitochondrial distribution and morphology protein 10 of Coprinopsis cinerea (strain Okayama-7 / 130 / ATCC MYA-4618 / FGSC 9003) (Inky cap fungus).